Consider the following 179-residue polypeptide: Large ribosomal subunit protein uL5 (179 aa).

Belongs to the universal ribosomal protein uL5 family. Part of the 50S ribosomal subunit; part of the 5S rRNA/L5/L18/L25 subcomplex. Contacts the 5S rRNA and the P site tRNA. Forms a bridge to the 30S subunit in the 70S ribosome.

This is one of the proteins that bind and probably mediate the attachment of the 5S RNA into the large ribosomal subunit, where it forms part of the central protuberance. In the 70S ribosome it contacts protein S13 of the 30S subunit (bridge B1b), connecting the 2 subunits; this bridge is implicated in subunit movement. Contacts the P site tRNA; the 5S rRNA and some of its associated proteins might help stabilize positioning of ribosome-bound tRNAs. This Buchnera aphidicola subsp. Acyrthosiphon kondoi (Acyrthosiphon kondoi symbiotic bacterium) protein is Large ribosomal subunit protein uL5.